The sequence spans 305 residues: GTPase Era (305 aa).

The Era-type G domain maps to 9-176 (KSGFISIIGR…LDTLPKYLPE (168 aa)). The tract at residues 17 to 24 (GRPNVGKS) is G1. A GTP-binding site is contributed by 17 to 24 (GRPNVGKS). Residues 43-47 (QTTRN) are G2. The segment at 64–67 (DTPG) is G3. GTP is bound by residues 64 to 68 (DTPGI) and 126 to 129 (NKID). A G4 region spans residues 126–129 (NKID). The tract at residues 155–157 (ISA) is G5. The KH type-2 domain occupies 207–286 (TREEIPHSIA…YLELWVKVQK (80 aa)).

This sequence belongs to the TRAFAC class TrmE-Era-EngA-EngB-Septin-like GTPase superfamily. Era GTPase family. Monomer.

Its subcellular location is the cytoplasm. The protein localises to the cell membrane. Functionally, an essential GTPase that binds both GDP and GTP, with rapid nucleotide exchange. Plays a role in 16S rRNA processing and 30S ribosomal subunit biogenesis and possibly also in cell cycle regulation and energy metabolism. This Lysinibacillus sphaericus (strain C3-41) protein is GTPase Era.